A 1012-amino-acid chain; its full sequence is Translation initiation factor IF-2, chloroplastic (1012 aa).

Positions 75 to 102 are enriched in low complexity; that stretch reads GNSVSLDSNSNSSSSSKSGGDDGTGFVL. Disordered stretches follow at residues 75 to 132, 147 to 294, and 319 to 340; these read GNSV…VEER, EKLG…KEKK, and APPK…RKKG. Residues 152-175 are compositionally biased toward polar residues; that stretch reads SKVNGDKNNGSVNKPVRNNANASP. A compositionally biased stretch (low complexity) spans 183–194; sequence SAASLKSKTLKS. Over residues 208-231 the composition is skewed to basic and acidic residues; sequence VVKEVPKPSYNKNEEEKSQTRGGE. The segment covering 240-257 has biased composition (pro residues); it reads PQPPSKPQPLKPQQPSKP. The segment covering 277 to 294 has biased composition (basic and acidic residues); it reads VLRDKGAAETSVKSKEKK. The 174-residue stretch at 488-661 folds into the tr-type G domain; the sequence is DRPPVITIMG…MLVAELQELK (174 aa). Residues 497 to 504 are G1; it reads GHVDHGKT. 497 to 504 provides a ligand contact to GTP; the sequence is GHVDHGKT. Residues 522-526 are G2; sequence GITQG. Residues 547 to 550 form a G3 region; it reads DTPG. GTP is bound by residues 547-551 and 601-604; these read DTPGH and NKID. Residues 601 to 604 are G4; that stretch reads NKID. The segment at 637–639 is G5; that stretch reads SAL.

This sequence belongs to the TRAFAC class translation factor GTPase superfamily. Classic translation factor GTPase family. IF-2 subfamily.

It localises to the plastid. The protein localises to the chloroplast. Its function is as follows. One of the essential components for the initiation of protein synthesis. Protects formylmethionyl-tRNA from spontaneous hydrolysis and promotes its binding to the 30S ribosomal subunits. Also involved in the hydrolysis of GTP during the formation of the 70S ribosomal complex. The sequence is that of Translation initiation factor IF-2, chloroplastic (IF2CP) from Phaseolus vulgaris (Kidney bean).